The sequence spans 443 residues: Thymidine phosphorylase (443 aa).

The protein belongs to the thymidine/pyrimidine-nucleoside phosphorylase family. As to quaternary structure, homodimer.

The enzyme catalyses thymidine + phosphate = 2-deoxy-alpha-D-ribose 1-phosphate + thymine. The protein operates within pyrimidine metabolism; dTMP biosynthesis via salvage pathway; dTMP from thymine: step 1/2. In terms of biological role, the enzymes which catalyze the reversible phosphorolysis of pyrimidine nucleosides are involved in the degradation of these compounds and in their utilization as carbon and energy sources, or in the rescue of pyrimidine bases for nucleotide synthesis. This Shewanella pealeana (strain ATCC 700345 / ANG-SQ1) protein is Thymidine phosphorylase.